Reading from the N-terminus, the 219-residue chain is Probable glutathione S-transferase MSR-1 (219 aa).

The region spanning 4–83 (NNVVLLDFSG…YIDEVWHEKC (80 aa)) is the GST N-terminal domain. Glutathione contacts are provided by residues Ser-14, Lys-41, Ile-55, and 67–68 (ES). Residues 89-208 (DPYQRSQARF…LPHPHKIYDF (120 aa)) enclose the GST C-terminal domain.

Belongs to the GST superfamily. HSP26 family.

It carries out the reaction RX + glutathione = an S-substituted glutathione + a halide anion + H(+). Functionally, may play an important role in hormonal and growth regulatory responses. The protein is Probable glutathione S-transferase MSR-1 (MSR-1) of Nicotiana plumbaginifolia (Leadwort-leaved tobacco).